Reading from the N-terminus, the 298-residue chain is Beta-1,3-galactosyltransferase 5 (298 aa).

Residues 1–7 (MAFPKMR) lie on the Cytoplasmic side of the membrane. A helical; Signal-anchor for type II membrane protein transmembrane segment spans residues 8 to 28 (LMYICLLVLGALCLYFSMYSL). Over 29–298 (NPFKEQSFVY…PRTLLDYWQA (270 aa)) the chain is Lumenal. N-linked (GlcNAc...) asparagine glycosylation is found at Asn130, Asn174, and Asn231.

It belongs to the glycosyltransferase 31 family.

It localises to the golgi apparatus membrane. It catalyses the reaction a globoside Gb4Cer (d18:1(4E)) + UDP-alpha-D-galactose = a globoside GalGb4Cer (d18:1(4E)) + UDP + H(+). It functions in the pathway protein modification; protein glycosylation. Catalyzes the transfer of Gal to GlcNAc-based acceptors with a preference for the core3 O-linked glycan GlcNAc(beta1,3)GalNAc structure. Can use glycolipid LC3Cer as an efficient acceptor. This is Beta-1,3-galactosyltransferase 5 (B3GALT5) from Gorilla gorilla gorilla (Western lowland gorilla).